We begin with the raw amino-acid sequence, 326 residues long: Tagatose 1,6-diphosphate aldolase (326 aa).

Belongs to the aldolase LacD family.

The enzyme catalyses D-tagatofuranose 1,6-bisphosphate = D-glyceraldehyde 3-phosphate + dihydroxyacetone phosphate. Its pathway is carbohydrate metabolism; D-tagatose 6-phosphate degradation; D-glyceraldehyde 3-phosphate and glycerone phosphate from D-tagatose 6-phosphate: step 2/2. In Staphylococcus aureus (strain MSSA476), this protein is Tagatose 1,6-diphosphate aldolase.